Reading from the N-terminus, the 442-residue chain is MAKKLYIETHGCQMNEYDSSRMVDLLGEHQALEVTARAEDADVILLNTCSIRERAQDRVYSQLGRWRELKLANPEMVIAVGGCVASQEGAAIRDRAPYVDVVFGPQTLHRLPEMIDAARITRLPQVDVSFPEIEKFDHLPEPRVDGPSAYVSVMEGCSKYCTFCVVPYTRGEEVSRPFDDVLSEVIHLAENGVREVTLLGQNVNGYRGTTHDGRVADLADLIRVVAAVDGIDRIRYTTSHPLEFSDSLIQAHAEVPELVKHLHLPVQSGSDRILAAMKRNHTTLEYKSRLRKLRAAVPGISISSDFIVGFPGETEKDFDNTMKLIEDVGFDFSFSFVYSPRPGTPAADLKDDTPEALKKERLAALQHRLNQQGFEISRQMVGSIQRILVTDYSKKDPGELQGRTENNRIVNFRCNNPKLIGQFADVHIDDAQPHSLRGSLLQ.

The MTTase N-terminal domain occupies 3–120 (KKLYIETHGC…LPEMIDAARI (118 aa)). [4Fe-4S] cluster-binding residues include C12, C49, C83, C157, C161, and C164. The Radical SAM core domain maps to 143–375 (RVDGPSAYVS…QHRLNQQGFE (233 aa)). The TRAM domain maps to 378–442 (RQMVGSIQRI…PHSLRGSLLQ (65 aa)).

It belongs to the methylthiotransferase family. MiaB subfamily. As to quaternary structure, monomer. [4Fe-4S] cluster serves as cofactor.

It localises to the cytoplasm. The enzyme catalyses N(6)-dimethylallyladenosine(37) in tRNA + (sulfur carrier)-SH + AH2 + 2 S-adenosyl-L-methionine = 2-methylsulfanyl-N(6)-dimethylallyladenosine(37) in tRNA + (sulfur carrier)-H + 5'-deoxyadenosine + L-methionine + A + S-adenosyl-L-homocysteine + 2 H(+). Its function is as follows. Catalyzes the methylthiolation of N6-(dimethylallyl)adenosine (i(6)A), leading to the formation of 2-methylthio-N6-(dimethylallyl)adenosine (ms(2)i(6)A) at position 37 in tRNAs that read codons beginning with uridine. The protein is tRNA-2-methylthio-N(6)-dimethylallyladenosine synthase of Pseudomonas savastanoi pv. phaseolicola (strain 1448A / Race 6) (Pseudomonas syringae pv. phaseolicola (strain 1448A / Race 6)).